Reading from the N-terminus, the 86-residue chain is UPF0367 protein NATL1_01981 (86 aa).

This sequence belongs to the UPF0367 family.

This is UPF0367 protein NATL1_01981 from Prochlorococcus marinus (strain NATL1A).